The sequence spans 76 residues: Signal recognition particle 9 kDa protein (76 aa).

The protein belongs to the SRP9 family. Heterodimer with SRP14; binds RNA as heterodimer. Component of a signal recognition particle complex that consists of a 7SL RNA molecule of 300 nucleotides and six protein subunits: srpa-72, srpa-68, SRP54, F37F2.2/SRP19, F25G6.8/SRP14 and ZK512.4/SRP9.

It is found in the cytoplasm. Its function is as follows. Component of the signal recognition particle (SRP) complex, a ribonucleoprotein complex that mediates the cotranslational targeting of secretory and membrane proteins to the endoplasmic reticulum (ER). SRP9 together with SRP14 and the Alu portion of the SRP RNA, constitutes the elongation arrest domain of SRP. The complex of SRP9 and SRP14 is required for SRP RNA binding. This chain is Signal recognition particle 9 kDa protein, found in Caenorhabditis elegans.